The following is a 205-amino-acid chain: MSKRIEAKYKINRRLGANLWGRSKSPLNRGKENPPGQHGQRRKKPSDFGTQLMAKQKLKGYYGNISEKQFRRLYDEAVRRRGDTSENLIGLLECRLDAVVYRLKFAPTPFAARQLVNHCHILVNGKRVNIPSYRVNEGDVISVKTKSKDMALILEAAQSGERDVPDYMEVDHKEMKGKFVRIPKLGDVPYAVQMEPNLVVEFYSR.

The interval 20 to 47 (WGRSKSPLNRGKENPPGQHGQRRKKPSD) is disordered. The S4 RNA-binding domain maps to 94 to 154 (CRLDAVVYRL…TKSKDMALIL (61 aa)).

This sequence belongs to the universal ribosomal protein uS4 family. In terms of assembly, part of the 30S ribosomal subunit. Contacts protein S5. The interaction surface between S4 and S5 is involved in control of translational fidelity.

Its function is as follows. One of the primary rRNA binding proteins, it binds directly to 16S rRNA where it nucleates assembly of the body of the 30S subunit. Functionally, with S5 and S12 plays an important role in translational accuracy. The chain is Small ribosomal subunit protein uS4 from Paramagnetospirillum magneticum (strain ATCC 700264 / AMB-1) (Magnetospirillum magneticum).